The sequence spans 395 residues: Subtilisin-like protease 5 (395 aa).

A signal peptide spans 1–19 (MGFLTVLYLSLAALSVTNA). Positions 20-115 (AQIMSAPNGA…VEPDAIISQH (96 aa)) are excised as a propeptide. In terms of domain architecture, Inhibitor I9 spans 36-112 (YIVVMKDDTS…VAFVEPDAII (77 aa)). The Peptidase S8 domain maps to 124-395 (PWGLSRLSNR…RRLLYNGSGR (272 aa)). Residues Asp-155 and His-186 each act as charge relay system in the active site. N-linked (GlcNAc...) asparagine glycans are attached at residues Asn-229 and Asn-247. Ser-341 serves as the catalytic Charge relay system. Residues 374–395 (QPTIHNPGPDTTRRLLYNGSGR) are disordered. A glycan (N-linked (GlcNAc...) asparagine) is linked at Asn-391.

It belongs to the peptidase S8 family.

The protein resides in the secreted. Secreted subtilisin-like serine protease with keratinolytic activity that contributes to pathogenicity. The polypeptide is Subtilisin-like protease 5 (SUB5) (Arthroderma otae (strain ATCC MYA-4605 / CBS 113480) (Microsporum canis)).